A 157-amino-acid polypeptide reads, in one-letter code: Transcriptional repressor NrdR (157 aa).

The segment at 3-34 (CPFCRHPDSRVVDSRTSDDGLSIRRRRQCPEC) is a zinc-finger region. The ATP-cone domain occupies 46 to 136 (LSVIKRNGVV…VYQGFDSLDD (91 aa)).

It belongs to the NrdR family. The cofactor is Zn(2+).

Functionally, negatively regulates transcription of bacterial ribonucleotide reductase nrd genes and operons by binding to NrdR-boxes. This Clavibacter sepedonicus (Clavibacter michiganensis subsp. sepedonicus) protein is Transcriptional repressor NrdR.